The primary structure comprises 1365 residues: MLNRENKTAITRKGMVSNRLNKFSIRKYTVGTASILVGTTLIFGLGNQEAKAAESTNKELNEATTSASDNQSSDKVDMQQLNQEDNTKNDNQKEMVSSQGNETTSNGNKSIEKESVQSTTGNKVEVSTAKSDEQASPKSTNEDLNTKQTISNQEALQPDLQENKSVVNAQPTNEENKKVDAKTESTTLNVKSDAIKSNAETLVDNNSNSNNENNADIILPKSTAPKRLNTRMRIAAVQPSSTEAKNVNDLITSNTTLTVVDADKNNKIVPAQDYLELKSQIKVDDKVKSGDYFTIKYSDTVQVYGLNPEDIKNIGDIKDPNNGETIATAKHDTANNLITYTFTDYVDRFNSVQMGINYSIYMDADTIPVSKNDVEFNVTIGNTTTKTTANIQYPDYVVNEKNSIGSAFTETVSHVGNKENPGYYKQTIYVNPSENSLTNAKLKVQAYHSSYPNNIGQINKEVTDIKIYQVPKGYTLNKGYDVNTKELTDVTNQYLQKITYGDNNSAVIDFGNADSAYVVMVNTKFQYTTSESPTLVQMVTLSSNNSKSASMGNALGFTNNQSGGAGQEVYKIGNYVWEDTNKNGVQELGEKGVGNVTVTVFDNNTNTKVGEAVTKEDGSYLIPNLPNGDYRVEFSNLPKGYEVTPSKQGNNEELDSNGLSSVITVNGKDNLSADLGIYKPKYNLGDYVWEDTNKNGIQDQDEKGISGVTVTLKDENGNVLKTVTTDADGKYKFTDLDNGNYKVEFTTPEGYTPTTVTSGSDIEKDSNGLTTTGVINGADNMTLDSGFYKTPKYNLGNYVWEDTNKDGKQDSTEKGISGVTVTLKNENGEVLQTTKTDKDGKYQFTGLENGTYKVEFETPSGYTPTQVGSGTDEGIDSNGTSTTGVIKDKDNDTIDSGFYKPTYNLGDYVWEDTNKNGVQDKDEKGISGVTVTLKDENDKVLKTVTTDENGKYQFTDLNNGTYKVEFETPSGYTPTSVTSGNDTEKDSNGLTTTGVIKDADNMTLDSGFYKTPKYSLGDYVWYDSNKDGKQDSTEKGIKDVKVTLLNEKGEVIGTTKTDENGKYRFDNLDSGKYKVIFEKPAGLTQTGTNTTEDDKDADGGEVDVTITDHDDFTLDNGYFEEDTSDSDSDSDSDSDSDSDSDSDSDSDSDSDSDSDSDSDSDSDSDSDSDSDSDSDSDSDSDSDSDSDSDSDSDSDSDSDSDSDSDSDSDSDSDSDSDSDSDSDSESDSDSDSDSDSDSDSDSDSDSDSDSDSDSDSDSDSDSDSDSDSDSDSDSDSDSDSDSDSDSDSDSDSDSDSDSDSDSDSDAGKHTPVKPMSTTKDHHNKAKALPETGNENSGSNNATLFGGLFAALGSLLLFGRRKKQNK.

The N-terminal stretch at 1–35 (MLNRENKTAITRKGMVSNRLNKFSIRKYTVGTASI) is a signal peptide. Residues 23–34 (FSIRKYTVGTAS) carry the YSIRK-G/S signaling motif motif. The ligand binding A region stretch occupies residues 36 to 568 (LVGTTLIFGL…NNQSGGAGQE (533 aa)). Positions 54 to 185 (ESTNKELNEA…NKKVDAKTES (132 aa)) are disordered. Polar residues-rich tracts occupy residues 62 to 71 (EATTSASDNQ) and 94 to 109 (EMVSSQGNETTSNGNK). A compositionally biased stretch (basic and acidic residues) spans 130–145 (KSDEQASPKSTNEDLN). Polar residues-rich tracts occupy residues 146–155 (TKQTISNQEA) and 163–173 (NKSVVNAQPTN). Residues 174–183 (EENKKVDAKT) show a composition bias toward basic and acidic residues. CNA-B domains follow at residues 569-680 (VYKI…IYKP), 681-791 (KYNL…YKTP), 792-901 (KYNL…FYKP), 902-1012 (TYNL…YKTP), and 1013-1123 (KYSL…EEDT). Disordered regions lie at residues 857–884 (ETPSGYTPTQVGSGTDEGIDSNGTSTTG), 972–991 (YTPTSVTSGNDTEKDSNGLT), and 1078–1341 (EKPA…SNNA). 2 stretches are compositionally biased toward polar residues: residues 860–869 (SGYTPTQVGS) and 972–981 (YTPTSVTSGN). Composition is skewed to acidic residues over residues 1091–1101 (TEDDKDADGGE) and 1118–1304 (YFEE…DSDS). Residues 1328–1332 (LPETG) carry the LPXTG sorting signal motif. Thr-1331 carries the post-translational modification Pentaglycyl murein peptidoglycan amidated threonine. The propeptide at 1332–1365 (GNENSGSNNATLFGGLFAALGSLLLFGRRKKQNK) is removed by sortase.

Belongs to the serine-aspartate repeat-containing protein (SDr) family. In terms of assembly, interacts with host DSG1; this interaction increases S.aureus adherence to keratinocytes.

Its subcellular location is the secreted. The protein localises to the cell wall. Cell surface-associated calcium-binding protein which plays an important role in adhesion and pathogenesis. Mediates interactions with components of the extracellular matrix such as host DSG1 to promote bacterial adhesion to host cells. Contributes to the resistance to killing by innate immune components such as neutrophils present in blood and thus attenuates bacterial clearance. The protein is Serine-aspartate repeat-containing protein D (sdrD) of Staphylococcus aureus (strain MSSA476).